The chain runs to 503 residues: Transcription termination/antitermination protein NusA (503 aa).

One can recognise an S1 motif domain in the interval 139–203 (GEIINGIVKR…KGPQIFLSRV (65 aa)). Positions 308 to 378 (RHKVEVVVSQ…LDVEEVIGQL (71 aa)) constitute a KH domain.

The protein belongs to the NusA family. Monomer. Binds directly to the core enzyme of the DNA-dependent RNA polymerase and to nascent RNA.

The protein resides in the cytoplasm. Participates in both transcription termination and antitermination. The polypeptide is Transcription termination/antitermination protein NusA (Rickettsia conorii (strain ATCC VR-613 / Malish 7)).